The chain runs to 482 residues: Zinc finger protein 223 (482 aa).

Residues 8–78 (VTFKDVAVVF…DIATQREGNS (71 aa)) form the KRAB domain. 5 consecutive C2H2-type zinc fingers follow at residues 176–198 (HSCD…QRVH), 204–226 (FKCD…QRVH), 232–254 (FKCE…CKLH), 260–282 (YNCE…QRIH), and 288–310 (FKCE…CVVH). The C2H2-type 6; degenerate zinc-finger motif lies at 316–338 (NSTGEYGKGFIRRLDLCKHQTIH). C2H2-type zinc fingers lie at residues 344-366 (YNCK…QRVH), 372-394 (YKCD…HRAH), and 400-422 (YNCD…KRLH). The C2H2-type 10; degenerate zinc-finger motif lies at 428-450 (FKCEDCGKKLVYRSYRKDQQKNH).

Belongs to the krueppel C2H2-type zinc-finger protein family.

The protein resides in the nucleus. In terms of biological role, may be involved in transcriptional regulation. The protein is Zinc finger protein 223 (ZNF223) of Homo sapiens (Human).